We begin with the raw amino-acid sequence, 994 residues long: Bifunctional glutamine synthetase adenylyltransferase/adenylyl-removing enzyme (994 aa).

The interval 1 to 487 is adenylyl removase; it reads MVVTKLATQR…LHTKLFYQPL (487 aa). Positions 492 to 994 are adenylyl transferase; that stretch reads GPTGLEIAHG…KAVVRKVFGS (503 aa).

This sequence belongs to the GlnE family. The cofactor is Mg(2+).

It carries out the reaction [glutamine synthetase]-O(4)-(5'-adenylyl)-L-tyrosine + phosphate = [glutamine synthetase]-L-tyrosine + ADP. The catalysed reaction is [glutamine synthetase]-L-tyrosine + ATP = [glutamine synthetase]-O(4)-(5'-adenylyl)-L-tyrosine + diphosphate. Functionally, involved in the regulation of glutamine synthetase GlnA, a key enzyme in the process to assimilate ammonia. When cellular nitrogen levels are high, the C-terminal adenylyl transferase (AT) inactivates GlnA by covalent transfer of an adenylyl group from ATP to specific tyrosine residue of GlnA, thus reducing its activity. Conversely, when nitrogen levels are low, the N-terminal adenylyl removase (AR) activates GlnA by removing the adenylyl group by phosphorolysis, increasing its activity. The regulatory region of GlnE binds the signal transduction protein PII (GlnB) which indicates the nitrogen status of the cell. This is Bifunctional glutamine synthetase adenylyltransferase/adenylyl-removing enzyme from Mycobacterium bovis (strain ATCC BAA-935 / AF2122/97).